Consider the following 162-residue polypeptide: Transcription elongation factor GreB (162 aa).

A coiled-coil region spans residues 52-76 (GKRRLREIDRRIRFLSKRLEALQII).

The protein belongs to the GreA/GreB family. GreB subfamily.

In terms of biological role, necessary for efficient RNA polymerase transcription elongation past template-encoded arresting sites. The arresting sites in DNA have the property of trapping a certain fraction of elongating RNA polymerases that pass through, resulting in locked ternary complexes. Cleavage of the nascent transcript by cleavage factors such as GreA or GreB allows the resumption of elongation from the new 3'terminus. GreB releases sequences of up to 9 nucleotides in length. The chain is Transcription elongation factor GreB from Haemophilus ducreyi (strain 35000HP / ATCC 700724).